Here is a 67-residue protein sequence, read N- to C-terminus: Small ribosomal subunit protein eS27 (67 aa).

4 residues coordinate Zn(2+): Cys-22, Cys-25, Cys-41, and Cys-44. The segment at 22 to 44 adopts a C4-type zinc-finger fold; that stretch reads CPDCGNEQVTFSHAAMVVRCLVC.

It belongs to the eukaryotic ribosomal protein eS27 family. Part of the 30S ribosomal subunit. Zn(2+) is required as a cofactor.

The protein is Small ribosomal subunit protein eS27 of Pyrobaculum calidifontis (strain DSM 21063 / JCM 11548 / VA1).